Consider the following 279-residue polypeptide: Pantothenate synthetase (279 aa).

31–38 (MGALHEGH) lines the ATP pocket. His-38 serves as the catalytic Proton donor. Gln-62 is a binding site for (R)-pantoate. Residue Gln-62 coordinates beta-alanine. 148-151 (GEKD) lines the ATP pocket. Gln-154 serves as a coordination point for (R)-pantoate. Residues Val-177 and 185 to 188 (LSSR) each bind ATP.

This sequence belongs to the pantothenate synthetase family. As to quaternary structure, homodimer.

It localises to the cytoplasm. The catalysed reaction is (R)-pantoate + beta-alanine + ATP = (R)-pantothenate + AMP + diphosphate + H(+). The protein operates within cofactor biosynthesis; (R)-pantothenate biosynthesis; (R)-pantothenate from (R)-pantoate and beta-alanine: step 1/1. Functionally, catalyzes the condensation of pantoate with beta-alanine in an ATP-dependent reaction via a pantoyl-adenylate intermediate. This is Pantothenate synthetase from Cereibacter sphaeroides (strain ATCC 17023 / DSM 158 / JCM 6121 / CCUG 31486 / LMG 2827 / NBRC 12203 / NCIMB 8253 / ATH 2.4.1.) (Rhodobacter sphaeroides).